A 968-amino-acid polypeptide reads, in one-letter code: RNA polymerase-associated protein RapA (968 aa).

Positions 164–334 (EVGQRHAPRV…FARLRLLDPD (171 aa)) constitute a Helicase ATP-binding domain. Residue 177–184 (DEVGLGKT) participates in ATP binding. Residues 280–283 (DEAH) carry the DEAH box motif. One can recognise a Helicase C-terminal domain in the interval 490 to 644 (RVEWLLNYLV…TCPTGRTIYD (155 aa)).

The protein belongs to the SNF2/RAD54 helicase family. RapA subfamily. Interacts with the RNAP. Has a higher affinity for the core RNAP than for the holoenzyme. Its ATPase activity is stimulated by binding to RNAP.

Functionally, transcription regulator that activates transcription by stimulating RNA polymerase (RNAP) recycling in case of stress conditions such as supercoiled DNA or high salt concentrations. Probably acts by releasing the RNAP, when it is trapped or immobilized on tightly supercoiled DNA. Does not activate transcription on linear DNA. Probably not involved in DNA repair. This Yersinia pseudotuberculosis serotype O:1b (strain IP 31758) protein is RNA polymerase-associated protein RapA.